We begin with the raw amino-acid sequence, 649 residues long: Protein PSK SIMULATOR 3 (649 aa).

Glycine 2 is lipidated: N-myristoyl glycine. The tract at residues 18-43 (SGSSVADDGREPDFGHSQPNGQTSLI) is disordered.

It localises to the nucleus. In terms of biological role, promotes plant growth, especially at the vegetative stage, probably via the regulation of phytosulfokine (PSK) signaling; PSK are peptide phytohormones acting as growth factors. Together with PSI2 and PSI3, required during vegetative growth and reproduction. May also have a function in carbohydrate metabolism. This chain is Protein PSK SIMULATOR 3, found in Arabidopsis thaliana (Mouse-ear cress).